Consider the following 93-residue polypeptide: Parbolysin P3 (93 aa).

3 cysteine pairs are disulfide-bonded: Cys-16–Cys-37, Cys-22–Cys-33, and Cys-47–Cys-60.

Belongs to the worm cytolysin family. In terms of tissue distribution, localized within the skin and proboscis and are most readily isolated from body mucus secretions.

The protein localises to the secreted. Its function is as follows. Cytolysin that shows hemolytic activity (on bovine erythrocytes, HC(50)=5.75 mg/ml). This hemolytic activity is completely inhibited by small unilamelar vesicles composed of PC/PG, PC/PI and PC/PS in 1:1 molar ratios (with at least 100 mg/ml concentration). This Parborlasia corrugatus (Antarctic nemertean worm) protein is Parbolysin P3.